The following is a 133-amino-acid chain: Large ribosomal subunit protein uL11 (133 aa).

This sequence belongs to the universal ribosomal protein uL11 family. Part of the ribosomal stalk of the 50S ribosomal subunit. Interacts with L10 and the large rRNA to form the base of the stalk. L10 forms an elongated spine to which 2 L12 dimers bind in a sequential fashion forming a pentameric L10(L12)2(L12)2 complex. In terms of processing, one or more lysine residues are methylated.

Functionally, forms part of the ribosomal stalk which helps the ribosome interact with GTP-bound translation factors. This Geobacillus stearothermophilus (Bacillus stearothermophilus) protein is Large ribosomal subunit protein uL11.